We begin with the raw amino-acid sequence, 371 residues long: 3-isopropylmalate dehydrogenase (371 aa).

Residue Thr-55 is modified to Phosphothreonine. 78-89 contacts NAD(+); the sequence is GPEWTNPNCRPE. The substrate site is built by Arg-96, Arg-106, Arg-135, and Asp-224. The Mg(2+) site is built by Asp-224, Asp-249, and Asp-253. NAD(+) is bound at residue 290-302; sequence GSAPDIAGKGIVN.

It belongs to the isocitrate and isopropylmalate dehydrogenases family. Homodimer. The cofactor is Mg(2+). Mn(2+) serves as cofactor.

It is found in the cytoplasm. It catalyses the reaction (2R,3S)-3-isopropylmalate + NAD(+) = 4-methyl-2-oxopentanoate + CO2 + NADH. It participates in amino-acid biosynthesis; L-leucine biosynthesis; L-leucine from 3-methyl-2-oxobutanoate: step 3/4. Catalyzes the oxidation of 3-carboxy-2-hydroxy-4-methylpentanoate (3-isopropylmalate) to 3-carboxy-4-methyl-2-oxopentanoate. The product decarboxylates to 4-methyl-2 oxopentanoate. In Schizosaccharomyces pombe (strain 972 / ATCC 24843) (Fission yeast), this protein is 3-isopropylmalate dehydrogenase (leu1).